We begin with the raw amino-acid sequence, 133 residues long: ATP synthase epsilon chain, chloroplastic (133 aa).

The protein belongs to the ATPase epsilon chain family. F-type ATPases have 2 components, CF(1) - the catalytic core - and CF(0) - the membrane proton channel. CF(1) has five subunits: alpha(3), beta(3), gamma(1), delta(1), epsilon(1). CF(0) has three main subunits: a, b and c.

The protein localises to the plastid. Its subcellular location is the chloroplast thylakoid membrane. Produces ATP from ADP in the presence of a proton gradient across the membrane. This is ATP synthase epsilon chain, chloroplastic from Solanum lycopersicum (Tomato).